The primary structure comprises 505 residues: 11S globulin seed storage protein 1 (505 aa).

The signal sequence occupies residues 1–24 (MAKPILLSIYLCLIIVALFNGCLA). 2 cysteine pairs are disulfide-bonded: C37/C70 and C113/C323. The 214-residue stretch at 42 to 255 (LDALEPTNRI…AFNVDTETAR (214 aa)) folds into the Cupin type-1 1 domain. 3 igE-binding regions span residues 118 to 132 (EESQ…RREF), 208 to 219 (EQHRRQQQHQQR), and 238 to 249 (FDAEFLADAFNV). The interval 193 to 232 (GNPDDEFRPQGQQEYEQHRRQQQHQQRRGEHGEQQRDLGN) is disordered. Over residues 219–228 (RRGEHGEQQR) the composition is skewed to basic and acidic residues. Basic and acidic residues predominate over residues 282 to 316 (WSREEQEHEERKERERERESESERRQSRRGGRDDN). Residues 282–318 (WSREEQEHEERKERERERESESERRQSRRGGRDDNGL) are disordered. Positions 316–321 (NGLEET) match the NGXEET; peptidase recognition motif motif. The Cupin type-1 2 domain occupies 329 to 478 (ENIGDPSRAD…AFQIPREDAR (150 aa)).

The protein belongs to the 11S seed storage protein (globulins) family. In terms of assembly, homohexamer. Each subunit is composed of an acidic and a basic chain derived from a single precursor and linked by a disulfide bond. Expressed in seeds (at protein level). Expressed in seeds.

Seed storage protein. This is 11S globulin seed storage protein 1 from Carya illinoinensis (Pecan).